We begin with the raw amino-acid sequence, 691 residues long: MSVPSSVIENHLVPKEIPVYRLNARESFNLLTEKEQLYAHHISVACWWGSKICLGQTSIESGPIFNLFQNLFSIQNLKSTVVPNIVSEEEYSDLLSYAATFYGNMGNYLSFGDSKFIPRISKEKLQLIINKVNDNKVNEYWGKCSELMYSLDKQVRELGIDGNGISTYYSPNITKVEIEKVQKFMDSKSISPYNTRLFKVSENNYNLLIASASTSTPTVSHQFDGYTINIVYGDWNKNLTKVVDNLKLALPYAANENQTNMLKKYIDSFYSGSIDDHKDSQRWWIKDISPAVETNIGFIESYRDPYGVRGEWEGFVSMVNKEMSLKFGKLTDNATTFLSKLPWDKSFEKEKFNKPDFTSLEVLTFATTGIPAGINLSNYDDIRQTEGFKNVSLGNVIAARKDEYVTFIQESDQKLFNELSTEAFELQVGIHELYGHGSGKLFTTDANGNVNFKVGEVINPLTNKPIDPKTEVYKFGETYDSVFKSLGSPMEECRAECCGIYLSPDEKILELFGFTDPKKAEDVYYVNWLIMARAGVCALEFYSPPSEGAPGKWRQAHMQARYCILTTFLRSGIVTLDKTADDVIVKLDKSKIRGIGVKAVGDFLNRLMVYKATANIDASIKLFDEYTHVNEEFLAIRDIVLAKKKPRKVFVQAHTYLNSNGKVCLQDFDDSTQGMIDSMITRFGKDDSDML.

His431 provides a ligand contact to Zn(2+). Glu432 is a catalytic residue. Zn(2+) contacts are provided by His436 and Glu492.

It belongs to the peptidase M49 family. Zn(2+) serves as cofactor.

Its subcellular location is the cytoplasm. The enzyme catalyses Release of an N-terminal dipeptide from a peptide comprising four or more residues, with broad specificity. Also acts on dipeptidyl 2-naphthylamides.. The sequence is that of Dipeptidyl peptidase 3 (dpp3-1) from Dictyostelium discoideum (Social amoeba).